A 1026-amino-acid polypeptide reads, in one-letter code: MSANNNMESEIKEIESISFGMMSSEDIRQMSSFEVKTAKISSTNLLETVHDPKSGPIGSAPCETCHQNEWDCPGHFGHIELNVPIIHPLFINHVVNILKIFCWKCNEFLLTKDHLELNNILKLEKEKKFNAVLEKIKKCDRCVHCTTPRADYKLVLNDITYKTIYRTFSYQGGAVKTARDKKLNESREIVSAEMVKKIFDNIKLEYVEMLGISHPKDFCLEVFPVIPSCCRPHEVQDGNINDDDLTYQLMEIVKNNSMIGAIKLEKESMEKQYPECLKVKEILLLSNVEKQKKEIDDFLKKPIKNGLKTKKKINKEEITPLDQYLKLHDKYVKYVNNLKFRIETYCNNSQGKATHATTGRAIKGLRERLTGKEGQIRNNLLGKRCEMSARTVIGPDPTLKIDEVIVPKEIAQSLTFPDFVNKHNIDRLTKLVNSGNAIRLVKKNESGQEIKINLAAAINNHGTPLQHDDIIKRPKITNNHEEKHNYEEKHNFDTFETIVIKDPKNFVLKEGDILFRNNFQQKVVLPSKKFIKLEEGWIVHRYLQNGDILVLNRQPTLHKASMMALRVKIMDVKTFKFNLACTKPYNADFDGDEMNAHAPQSEESKAELFTLSTPKQCIMSCQSGKPNLTIVQDSLTGAYLMSKENNNDATLTNGEFNDILMVLTQNDEYNGDVVDYFLKRKEDVSNTLKKLGFSGTVLNGKGLLSLLFPNDLYINEEDLKINRGVIYDGCLTKKYLSSTESSLIKILYKEYGVETCATFLNNIQFLTNRWLMISSFSIHAGDCIKQKEVLGTVEQCLMESEKIKMTTQNPFIREQKIMQTLSNAKDVGMKIAKDALKRDNVNLHAQNNFLTTVESGSKGDHLNIAQITSLLGQQITEGQRVKPLLSNGKRTLPHYILKEENNDTEHFHDLLEEYESQGFISSSFAQGLNPKEFFFHCMAGRQGVCDTAMSTATSGYIMRRNVKLTEDIKVAYDGTVQDTRGRRFQMAYGELGYDPSKLVKVNGKPEVCNIARLVNKLNCNFEDNIK.

Positions 62, 65, 72, 75, 102, 105, and 142 each coordinate Zn(2+). Mg(2+) contacts are provided by Asp-588, Asp-590, and Asp-592.

Belongs to the RNA polymerase beta' chain family.

It catalyses the reaction RNA(n) + a ribonucleoside 5'-triphosphate = RNA(n+1) + diphosphate. Its function is as follows. Component of the DNA-dependent RNA polymerase that catalyzes the transcription of DNA into RNA using the four ribonucleoside triphosphates as substrates. Largest and catalytic component of RNA polymerase II which synthesizes mRNA precursors and many functional non-coding RNAs. Forms the polymerase active center together with the second largest subunit. The sequence is that of Probable DNA-directed RNA polymerase II subunit RPB1 homolog from Acheta domesticus (House cricket).